A 79-amino-acid polypeptide reads, in one-letter code: Sec-independent protein translocase protein TatA (79 aa).

A helical transmembrane segment spans residues 1–21 (MGGFTSIWHWVIVLLVIVLLF). The disordered stretch occupies residues 48 to 79 (EEEAKNEPKTLDAQVAQTKVHETSEIKSKQES). The span at 66–79 (KVHETSEIKSKQES) shows a compositional bias: basic and acidic residues.

This sequence belongs to the TatA/E family. The Tat system comprises two distinct complexes: a TatABC complex, containing multiple copies of TatA, TatB and TatC subunits, and a separate TatA complex, containing only TatA subunits. Substrates initially bind to the TatABC complex, which probably triggers association of the separate TatA complex to form the active translocon.

It is found in the cell inner membrane. Part of the twin-arginine translocation (Tat) system that transports large folded proteins containing a characteristic twin-arginine motif in their signal peptide across membranes. TatA could form the protein-conducting channel of the Tat system. The protein is Sec-independent protein translocase protein TatA of Helicobacter pylori (strain Shi470).